Consider the following 402-residue polypeptide: NADH-quinone oxidoreductase subunit D 2 (402 aa).

It belongs to the complex I 49 kDa subunit family. In terms of assembly, NDH-1 is composed of 14 different subunits. Subunits NuoB, C, D, E, F, and G constitute the peripheral sector of the complex.

Its subcellular location is the cell inner membrane. It catalyses the reaction a quinone + NADH + 5 H(+)(in) = a quinol + NAD(+) + 4 H(+)(out). Its function is as follows. NDH-1 shuttles electrons from NADH, via FMN and iron-sulfur (Fe-S) centers, to quinones in the respiratory chain. The immediate electron acceptor for the enzyme in this species is believed to be ubiquinone. Couples the redox reaction to proton translocation (for every two electrons transferred, four hydrogen ions are translocated across the cytoplasmic membrane), and thus conserves the redox energy in a proton gradient. In Nitrobacter hamburgensis (strain DSM 10229 / NCIMB 13809 / X14), this protein is NADH-quinone oxidoreductase subunit D 2.